A 414-amino-acid polypeptide reads, in one-letter code: Protein MAK11 (414 aa).

Ser-2 is subject to N-acetylserine. WD repeat units lie at residues 50-78 (AHSLSIKCLAVSRRYLVSGSNDEHIRIYD), 90-135 (SHQG…MVWR), 147-177 (GHTARVNDVDIHPTNRIAISVSDDHSIRLWN), 189-221 (LRKYNTNGTCVRWLGAKGDYFAVGLRDRVLIYE), 238-267 (LMHIETHILPFDNKEYLSVGISDGNVHFYP), and 298-330 (GHTNRIKDFKFYTNEFGTYLVTIGSDGKIVVWD). Residues Ser-376 and Ser-380 each carry the phosphoserine modification. Position 382 is a phosphothreonine (Thr-382).

In terms of assembly, associates with 60S pre-ribosomal particles.

It localises to the nucleus. The protein localises to the nucleolus. It is found in the nucleus membrane. Essential for cell growth. Plays a role in assembly of 60S pre-ribosomal particles in the nucleolus. Also required for replication of the M1 double-stranded RNA of the L-A virus. This latter function may reflect an enhanced requirement for free 60S ribosomal particles for the translation of viral mRNAs which lack poly-A tails. This chain is Protein MAK11 (MAK11), found in Saccharomyces cerevisiae (strain ATCC 204508 / S288c) (Baker's yeast).